The chain runs to 120 residues: Large ribosomal subunit protein eL34z (120 aa).

Residues 31–51 (VYQTTKKRASGPKCPVTGKRI) form a disordered region.

The protein belongs to the eukaryotic ribosomal protein eL34 family.

The protein is Large ribosomal subunit protein eL34z (RPL34A) of Arabidopsis thaliana (Mouse-ear cress).